The chain runs to 60 residues: Cytotoxin 1 (60 aa).

Cystine bridges form between C3-C21, C14-C38, C42-C53, and C54-C59.

The protein belongs to the three-finger toxin family. Short-chain subfamily. Type IA cytotoxin sub-subfamily. As to quaternary structure, monomer in solution; Homodimer and oligomer in the presence of negatively charged lipids forming a pore with a size ranging between 20 and 30 Angstroms. As to expression, expressed by the venom gland.

The protein localises to the secreted. It localises to the target cell membrane. In terms of biological role, shows cytolytic activity on many different cells by forming pore in lipid membranes. In vivo, increases heart rate or kills the animal by cardiac arrest. In addition, it binds to heparin with high affinity, interacts with Kv channel-interacting protein 1 (KCNIP1) in a calcium-independent manner, and binds to integrin alpha-V/beta-3 (ITGAV/ITGB3) with moderate affinity. The chain is Cytotoxin 1 from Naja mossambica (Mozambique spitting cobra).